Reading from the N-terminus, the 405-residue chain is Dynactin subunit 2 (405 aa).

The disordered stretch occupies residues 1 to 24; it reads MADPKYANLPGIASNEPDVYETSD. Coiled coils occupy residues 102–125 and 379–405; these read QQKY…IQTS and QQTM…KLNK.

It belongs to the dynactin subunit 2 family. In terms of assembly, subunit of dynactin, a multiprotein complex part of a tripartite complex with dynein and a adapter, such as BICDL1, BICD2 or HOOK3. The dynactin complex is built around ACTR1A/ACTB filament and consists of an actin-related filament composed of a shoulder domain, a pointed end and a barbed end. Its length is defined by its flexible shoulder domain. The soulder is composed of 2 DCTN1 subunits, 4 DCTN2 and 2 DCTN3.

The protein localises to the cytoplasm. Its subcellular location is the cytoskeleton. The protein resides in the microtubule organizing center. It localises to the centrosome. It is found in the membrane. Its function is as follows. Part of the dynactin complex that activates the molecular motor dynein for ultra-processive transport along microtubules. In the dynactin soulder domain, binds the ACTR1A filament and acts as a molecular ruler to determine the length. Modulates cytoplasmic dynein binding to an organelle, and plays a role in prometaphase chromosome alignment and spindle organization during mitosis. Involved in anchoring microtubules to centrosomes. In Danio rerio (Zebrafish), this protein is Dynactin subunit 2 (dctn2).